The sequence spans 236 residues: 3-oxoacyl-[acyl-carrier-protein] reductase (236 aa).

Residue Met1 is modified to N-acetylmethionine. Residues 11–14 and 34–35 contribute to the NADP(+) site; these read SRGI and RN. Lys40 carries the N6-acetyllysine modification. 83-85 is a binding site for NADP(+); that stretch reads AAG. N6-acetyllysine is present on Lys96. Ser134 lines the substrate pocket. Residues Tyr147, Lys151, and 180 to 182 contribute to the NADP(+) site; that span reads IHT. Tyr147 (proton acceptor) is an active-site residue. The residue at position 194 (Lys194) is an N6-acetyllysine.

This sequence belongs to the short-chain dehydrogenases/reductases (SDR) family. As to quaternary structure, homotetramer (in vitro). Heterotetramer with HSD17B8; contains two molecules each of HSD17B8 and CBR4. Does not form homotetramers when HSD17B8 is coexpressed, only heterotetramers (in vitro).

The protein resides in the mitochondrion matrix. The catalysed reaction is a (3R)-hydroxyacyl-[ACP] + NADP(+) = a 3-oxoacyl-[ACP] + NADPH + H(+). The enzyme catalyses a quinone + NADPH + H(+) = a quinol + NADP(+). It participates in lipid metabolism; fatty acid biosynthesis. Its function is as follows. Component of the heterotetramer complex KAR (3-ketoacyl-[acyl carrier protein] reductase or 3-ketoacyl-[ACP] reductase) that forms part of the mitochondrial fatty acid synthase (mtFAS). Beta-subunit of the KAR heterotetramer complex, responsible for the 3-ketoacyl-ACP reductase activity of the mtFAS, reduces 3-oxoacyl-[ACP] to (3R)-hydroxyacyl-[ACP] in a NADPH-dependent manner with no chain length preference, thereby participating in mitochondrial fatty acid biosynthesis. The homotetramer has NADPH-dependent quinone reductase activity (in vitro), hence could play a role in protection against cytotoxicity of exogenous quinones. As a heterotetramer, it can also reduce 9,10-phenanthrenequinone, 1,4-benzoquinone and various other o-quinones and p-quinones (in vitro). The polypeptide is 3-oxoacyl-[acyl-carrier-protein] reductase (Cbr4) (Rattus norvegicus (Rat)).